The primary structure comprises 617 residues: MDAPSTSSGAQSKLLMPGDDEADEDHQNRGDPNLQQKQKIQLNVDPDYDDDEDDDCFIDGCEASAPITRELVDGAIERRSKDRNVKMSIGVYDEYDDDDDDEEETEEDQRRRFVEGIRNIRHKQQESFDLEEHPIPVESEAMRQFINQQVNNAMMFNQDNSEFQHIEFEPIVKQKGPKIIEGYMWGGQIGTGSYGKVKECIDMYTLTRRAVKIMKYDKLRKITNGWENIRSEMSILRRMNHRNVIKLIEIFNIPAKGKVYMVFEYCIGSVQQLLDMEPARRLTIGESHAIFIELCQGLNYLHSKRVSHKDIKPGNLLVSIDFTVKICDFGVAEQINLFQRDGRCTKVNGTPKFQPPECIYGNHDFFDGYKADMWSAGVTLYNLVSGKYPFEKPVLLKLYECIGTEPLQMPTNVQLTKDLQDLLTKLLEKDFNERPTCLETMIHPWFLSTFPEDQGLGRIMERMRTGDRPLTMLSSMTALYDGITPEDELIIEDNLGIIQQILPINLTSEAVLERGSFPGFKFLEAKPGDGPDGVEGSEDSAAPLGPQRRPSSRSMPTCAPPGPAAGNAQNSTAENGAETDGVASASDPPPTAAPGAPPRRRKRNFFSCIFRSRTDSA.

Positions 1 to 11 are enriched in polar residues; it reads MDAPSTSSGAQ. Residues 1 to 59 are disordered; the sequence is MDAPSTSSGAQSKLLMPGDDEADEDHQNRGDPNLQQKQKIQLNVDPDYDDDEDDDCFID. Residues 46–57 are compositionally biased toward acidic residues; that stretch reads PDYDDDEDDDCF. Positions 183 to 446 constitute a Protein kinase domain; that stretch reads YMWGGQIGTG…CLETMIHPWF (264 aa). Residues 189–197 and Lys-212 each bind ATP; that span reads IGTGSYGKV. Asp-310 serves as the catalytic Proton acceptor. Residues 523 to 617 are disordered; it reads LEAKPGDGPD…CIFRSRTDSA (95 aa). The segment covering 587–597 has biased composition (pro residues); sequence DPPPTAAPGAP.

It belongs to the protein kinase superfamily. CAMK Ser/Thr protein kinase family. LKB1 subfamily. As to quaternary structure, interacts with strd-1. Mg(2+) is required as a cofactor. It depends on Mn(2+) as a cofactor. As to expression, expressed in the gonads, oocytes and early embryos (at protein level).

It is found in the cytoplasm. The protein localises to the cell cortex. The enzyme catalyses L-seryl-[protein] + ATP = O-phospho-L-seryl-[protein] + ADP + H(+). It catalyses the reaction L-threonyl-[protein] + ATP = O-phospho-L-threonyl-[protein] + ADP + H(+). Required for cytoplasmic partitioning and asymmetric cell division in early embryogenesis. Controls the asymmetric cell division of the Q.p neuroblast lineage. Involved in mediating cell polarization via regulation of anillin family scaffold proteins. Phosphorylates and restricts the asymmetry effectors mex-5 and mex-6 to the anterior cytoplasm of the zygote and maintains these phosphorylations until fertilization. May phosphorylate par-1. Required for strd-1 localization to the cell cortex of early embryos and may be required for strd-1 protein stabilization. May regulate the integrity of the early embryonic cortex in a strd-1-dependent manner. Phosphorylates and regulates aak-2 in response to oxidative stress and during dauer development. May also play a role in motility, behavioral response, regulation of lifespan and dauer formation through this pathway. Required to establish germline stem cell (GSC) quiescence during dauer development. Acts downstream of unc-40 in dendrite outgrowth. May play a role in cell shedding during embryogenesis, probably by phosphorylating pig-1. This is Serine/threonine-protein kinase par-4 (par-4) from Caenorhabditis elegans.